A 142-amino-acid polypeptide reads, in one-letter code: MEVFDMKSFLGDEVIVRQSSGYSCGPAALATVLRNLGVHCSEAELAELAGTDESGTTMYGLILAATSKGVSARGVRMEISDLRRNHIAFVRYGDTAHYTVVLSVDDRNITLADPAMGRIRIRRDIFSKIFTGNVLVVEREED.

A Peptidase C39 domain is found at Q18–V137.

This is an uncharacterized protein from Methanothermobacter marburgensis (strain ATCC BAA-927 / DSM 2133 / JCM 14651 / NBRC 100331 / OCM 82 / Marburg) (Methanobacterium thermoautotrophicum).